Consider the following 430-residue polypeptide: Glutamate-1-semialdehyde 2,1-aminomutase (430 aa).

Lys265 is modified (N6-(pyridoxal phosphate)lysine).

This sequence belongs to the class-III pyridoxal-phosphate-dependent aminotransferase family. HemL subfamily. As to quaternary structure, homodimer. Pyridoxal 5'-phosphate is required as a cofactor.

The protein localises to the cytoplasm. It carries out the reaction (S)-4-amino-5-oxopentanoate = 5-aminolevulinate. The protein operates within porphyrin-containing compound metabolism; protoporphyrin-IX biosynthesis; 5-aminolevulinate from L-glutamyl-tRNA(Glu): step 2/2. In Helicobacter pylori (strain J99 / ATCC 700824) (Campylobacter pylori J99), this protein is Glutamate-1-semialdehyde 2,1-aminomutase (hemL).